Reading from the N-terminus, the 296-residue chain is 33 kDa chaperonin (296 aa).

Cystine bridges form between cysteine 233-cysteine 235 and cysteine 267-cysteine 270.

Belongs to the HSP33 family. Under oxidizing conditions two disulfide bonds are formed involving the reactive cysteines. Under reducing conditions zinc is bound to the reactive cysteines and the protein is inactive.

It localises to the cytoplasm. Functionally, redox regulated molecular chaperone. Protects both thermally unfolding and oxidatively damaged proteins from irreversible aggregation. Plays an important role in the bacterial defense system toward oxidative stress. The chain is 33 kDa chaperonin from Actinobacillus pleuropneumoniae serotype 5b (strain L20).